Consider the following 53-residue polypeptide: MLNLLWLVVVLMVIAALLGFGGVVSSLQSVAWFLIVAAVVLAVVGFVTGRRAL.

2 helical membrane-spanning segments follow: residues 4-24 (LLWL…GGVV) and 32-49 (WFLI…FVTG).

This sequence belongs to the UPF0391 family.

The protein resides in the cell membrane. The protein is UPF0391 membrane protein gsr2640 of Gloeobacter violaceus (strain ATCC 29082 / PCC 7421).